The primary structure comprises 406 residues: Renin (406 aa).

Positions Met1 to Gly23 are cleaved as a signal peptide. The propeptide at Leu24–Arg66 is activation peptide. Asn71 carries N-linked (GlcNAc...) asparagine glycosylation. A Peptidase A1 domain is found at Tyr86 to Ala403. Asp104 is an active-site residue. Cys117 and Cys124 are disulfide-bonded. An N-linked (GlcNAc...) asparagine glycan is attached at Asn141. A disulfide bridge links Cys283 with Cys287. Asp292 is a catalytic residue. An intrachain disulfide couples Cys325 to Cys362.

The protein belongs to the peptidase A1 family. As to quaternary structure, interacts with ATP6AP2.

The protein localises to the secreted. The protein resides in the membrane. It carries out the reaction Cleavage of Leu-|-Xaa bond in angiotensinogen to generate angiotensin I.. Its activity is regulated as follows. Interaction with ATP6AP2 results in a 5-fold increased efficiency in angiotensinogen processing. In terms of biological role, renin is a highly specific endopeptidase, whose only known function is to generate angiotensin I from angiotensinogen in the plasma, initiating a cascade of reactions that produce an elevation of blood pressure and increased sodium retention by the kidney. This chain is Renin (REN), found in Homo sapiens (Human).